The following is an 820-amino-acid chain: Serine/threonine-protein phosphatase 4 regulatory subunit 3B (820 aa).

Residues 1–100 (MSDTRRRVKV…DEIWEKICQV (100 aa)) enclose the WH1 domain. Phosphoserine is present on residues serine 117 and serine 663. A disordered region spans residues 687 to 820 (EDDDEEGKAV…SPRKRPRLGS (134 aa)). The span at 701–732 (EKSKTEDDFPDSYEKFMETKKAKESEDKENLP) shows a compositional bias: basic and acidic residues. Over residues 744-789 (FSHSPSATNGTNSTNSKSVVSQTTPASSNVASSKTTSLATSVTATK) the composition is skewed to polar residues. Residues 798–809 (YPDDEEEDEEEE) show a composition bias toward acidic residues. A Phosphoserine modification is found at serine 811.

It belongs to the SMEK family. In terms of assembly, serine/threonine-protein phosphatase 4 (PP4) occurs in different assemblies of the catalytic and one or more regulatory subunits. Component of the PP4 complex PPP4C-PPP4R2-PPP4R3B.

It localises to the cytoplasm. It is found in the cytoskeleton. The protein resides in the microtubule organizing center. The protein localises to the centrosome. Its subcellular location is the nucleus. In terms of biological role, regulatory subunit of serine/threonine-protein phosphatase 4 (PP4). May regulate the activity of PPP4C at centrosomal microtubule organizing centers. The chain is Serine/threonine-protein phosphatase 4 regulatory subunit 3B from Mus musculus (Mouse).